Reading from the N-terminus, the 179-residue chain is Crossover junction endodeoxyribonuclease RuvC (179 aa).

Active-site residues include Asp7 and Glu67. Residues Asp7 and Glu67 each coordinate Mn(2+). A DNA-binding loop motif is present at residues 68 to 74 (DQILRRQ). Catalysis depends on residues His139 and Asp142. A Mn(2+)-binding site is contributed by His139.

Belongs to the RuvC family. In terms of assembly, homodimer which binds Holliday junction (HJ) DNA. The HJ becomes 2-fold symmetrical on binding to RuvC with unstacked arms; it has a different conformation from HJ DNA in complex with RuvA. In the full resolvosome a probable DNA-RuvA(4)-RuvB(12)-RuvC(2) complex forms which resolves the HJ. The cofactor is Mn(2+).

It is found in the cytoplasm. The catalysed reaction is Endonucleolytic cleavage at a junction such as a reciprocal single-stranded crossover between two homologous DNA duplexes (Holliday junction).. The RuvA-RuvB-RuvC complex processes Holliday junction (HJ) DNA during genetic recombination and DNA repair. Endonuclease that resolves HJ intermediates. Cleaves cruciform DNA by making single-stranded nicks across the HJ at symmetrical positions within the homologous arms, probably yielding a 5'-phosphate and a 3'-hydroxyl group; requires a central core of homology in the junction. The consensus cleavage sequence is 5'-(G/C)TC(C/G)-3' (a different site than E.coli); cleavage occurs on the 3'-side of the TC dinucleotide at the point of strand exchange. Also resolves nicked HJ intermediates, replication forks and Y-junction DNA in vitro. HJ branch migration catalyzed by RuvA-RuvB allows RuvC to scan DNA until it finds its consensus sequence, where it cleaves and resolves the cruciform DNA. Its function is as follows. Binds HJ DNA independently of homologous core or consensus sequence; Mn(2+) is not essential for binding but improves it, while &gt;1.0 mM Mg(2+) inhibit binding. Also binds Y-junction DNA less well. Requires a homologous core to cleave DNA. Another study shows divalent cations (Mn(2+), Mg(2+) and Ca(2+), tested up to 5.0 mM) improve DNA binding considerably over binding in their absence. The protein is Crossover junction endodeoxyribonuclease RuvC of Deinococcus radiodurans (strain ATCC 13939 / DSM 20539 / JCM 16871 / CCUG 27074 / LMG 4051 / NBRC 15346 / NCIMB 9279 / VKM B-1422 / R1).